Here is a 272-residue protein sequence, read N- to C-terminus: Phosphate import ATP-binding protein PstB (272 aa).

The ABC transporter domain occupies 26–267 (LEIRNLDLRY…PKKRKTEDYI (242 aa)). 58–65 (GPSGCGKS) contacts ATP.

It belongs to the ABC transporter superfamily. Phosphate importer (TC 3.A.1.7) family. The complex is composed of two ATP-binding proteins (PstB), two transmembrane proteins (PstC and PstA) and a solute-binding protein (PstS).

It localises to the cell inner membrane. It carries out the reaction phosphate(out) + ATP + H2O = ADP + 2 phosphate(in) + H(+). Functionally, part of the ABC transporter complex PstSACB involved in phosphate import. Responsible for energy coupling to the transport system. The chain is Phosphate import ATP-binding protein PstB from Shewanella frigidimarina (strain NCIMB 400).